The primary structure comprises 160 residues: Small ribosomal subunit protein uS9 (160 aa).

The protein belongs to the universal ribosomal protein uS9 family.

The polypeptide is Small ribosomal subunit protein uS9 (Cereibacter sphaeroides (strain ATCC 17029 / ATH 2.4.9) (Rhodobacter sphaeroides)).